The primary structure comprises 377 residues: uncharacterized protein (377 aa).

Residues 1-25 (MAQQTNVAGQKTEKQRKAPFRADHV) are disordered. Residues 11–24 (KTEKQRKAPFRADH) are compositionally biased toward basic and acidic residues.

It to B.subtilis YxjG.

This is an uncharacterized protein from Bacillus subtilis (strain 168).